The chain runs to 129 residues: Small ribosomal subunit protein uS11c (129 aa).

It belongs to the universal ribosomal protein uS11 family. In terms of assembly, part of the 30S ribosomal subunit.

It localises to the plastid. The protein resides in the chloroplast. This is Small ribosomal subunit protein uS11c from Rhodomonas salina (Cryptomonas salina).